A 205-amino-acid polypeptide reads, in one-letter code: Isochorismatase domain-containing protein 2 (205 aa).

2 positions are modified to phosphoserine: serine 7 and serine 202.

It belongs to the isochorismatase family. As to quaternary structure, interacts with CDKN2A.

Its subcellular location is the cytoplasm. It is found in the nucleus. The chain is Isochorismatase domain-containing protein 2 (ISOC2) from Homo sapiens (Human).